The primary structure comprises 475 residues: UDP-glycosyltransferase 76E1 (475 aa).

Histidine 19 serves as the catalytic Proton acceptor. Histidine 19 serves as a coordination point for an anthocyanidin. The active-site Charge relay is the aspartate 109. Threonine 131, alanine 329, glutamine 331, histidine 346, tryptophan 349, asparagine 350, serine 351, and glutamate 354 together coordinate UDP-alpha-D-glucose. Alanine 369 lines the an anthocyanidin pocket. UDP-alpha-D-glucose-binding residues include aspartate 370 and glutamine 371.

Belongs to the UDP-glycosyltransferase family. As to expression, expressed in flowers and fruits.

The protein resides in the cytoplasm. It localises to the nucleus. It carries out the reaction 2-cis-(+)-abscisate + UDP-alpha-D-glucose = beta-D-glucopyranosyl cis-(+)-abscisate + UDP. Functionally, glucosyltransferase acting on abscisic acid (ABA) but not on auxin (IAA). The chain is UDP-glycosyltransferase 76E1 from Solanum lycopersicum (Tomato).